We begin with the raw amino-acid sequence, 473 residues long: Photosystem II CP43 reaction center protein (473 aa).

Positions 1–14 (MKTLYSPRRFYPVE) are excised as a propeptide. T15 bears the N-acetylthreonine mark. T15 carries the phosphothreonine modification. Transmembrane regions (helical) follow at residues 69 to 93 (LFEV…PHLA), 134 to 155 (LIGP…KDRN), 178 to 200 (KALF…RKIT), 255 to 275 (KPFA…LSYS), and 291 to 312 (WFNN…ASQA). A [CaMn4O5] cluster-binding site is contributed by E367. A helical transmembrane segment spans residues 447–471 (RARAAAAGFEKGIDRDLEPVLFMTP).

This sequence belongs to the PsbB/PsbC family. PsbC subfamily. PSII is composed of 1 copy each of membrane proteins PsbA, PsbB, PsbC, PsbD, PsbE, PsbF, PsbH, PsbI, PsbJ, PsbK, PsbL, PsbM, PsbT, PsbX, PsbY, PsbZ, Psb30/Ycf12, at least 3 peripheral proteins of the oxygen-evolving complex and a large number of cofactors. It forms dimeric complexes. Requires Binds multiple chlorophylls and provides some of the ligands for the Ca-4Mn-5O cluster of the oxygen-evolving complex. It may also provide a ligand for a Cl- that is required for oxygen evolution. PSII binds additional chlorophylls, carotenoids and specific lipids. as cofactor.

The protein localises to the plastid. The protein resides in the chloroplast thylakoid membrane. One of the components of the core complex of photosystem II (PSII). It binds chlorophyll and helps catalyze the primary light-induced photochemical processes of PSII. PSII is a light-driven water:plastoquinone oxidoreductase, using light energy to abstract electrons from H(2)O, generating O(2) and a proton gradient subsequently used for ATP formation. This is Photosystem II CP43 reaction center protein from Gnetum parvifolium (Small-leaved jointfir).